The chain runs to 362 residues: 3-dehydroquinate synthase (362 aa).

NAD(+) is bound by residues 71–76 (DGEQYK), 105–109 (GVIGD), 129–130 (TT), Lys142, Lys151, and 169–172 (CLKT). Zn(2+)-binding residues include Glu184, His247, and His264.

It belongs to the sugar phosphate cyclases superfamily. Dehydroquinate synthase family. Requires Co(2+) as cofactor. Zn(2+) is required as a cofactor. It depends on NAD(+) as a cofactor.

It localises to the cytoplasm. It carries out the reaction 7-phospho-2-dehydro-3-deoxy-D-arabino-heptonate = 3-dehydroquinate + phosphate. Its pathway is metabolic intermediate biosynthesis; chorismate biosynthesis; chorismate from D-erythrose 4-phosphate and phosphoenolpyruvate: step 2/7. Catalyzes the conversion of 3-deoxy-D-arabino-heptulosonate 7-phosphate (DAHP) to dehydroquinate (DHQ). In Salmonella schwarzengrund (strain CVM19633), this protein is 3-dehydroquinate synthase.